The primary structure comprises 292 residues: Peroxidase 2 (292 aa).

4 disulfides stabilise this stretch: Cys-7–Cys-86, Cys-40–Cys-45, Cys-92–Cys-288, and Cys-171–Cys-199. The active-site Proton acceptor is His-38. 5 residues coordinate Ca(2+): Asp-39, Val-42, Gly-44, Asp-46, and Ser-48. The N-linked (GlcNAc...) asparagine glycan is linked to Asn-68. Pro-134 is a binding site for substrate. Asn-139 carries an N-linked (GlcNAc...) asparagine glycan. His-164 contributes to the heme b binding site. Thr-165 contacts Ca(2+). N-linked (GlcNAc...) asparagine glycosylation occurs at Asn-179. Positions 210, 213, and 218 each coordinate Ca(2+).

This sequence belongs to the peroxidase family. Classical plant (class III) peroxidase subfamily. Requires Ca(2+) as cofactor. Heme b is required as a cofactor.

It carries out the reaction 2 a phenolic donor + H2O2 = 2 a phenolic radical donor + 2 H2O. Removal of H(2)O(2), oxidation of toxic reductants, biosynthesis and degradation of lignin, suberization, auxin catabolism, response to environmental stresses such as wounding, pathogen attack and oxidative stress. These functions might be dependent on each isozyme/isoform in each plant tissue. The protein is Peroxidase 2 of Cucumis sativus (Cucumber).